The primary structure comprises 141 residues: Ribosome-binding factor A (141 aa).

A disordered region spans residues 120-141; that stretch reads DEALRAQSAGARPAGDEDPYKP.

It belongs to the RbfA family. In terms of assembly, monomer. Binds 30S ribosomal subunits, but not 50S ribosomal subunits or 70S ribosomes.

It is found in the cytoplasm. Its function is as follows. One of several proteins that assist in the late maturation steps of the functional core of the 30S ribosomal subunit. Associates with free 30S ribosomal subunits (but not with 30S subunits that are part of 70S ribosomes or polysomes). Required for efficient processing of 16S rRNA. May interact with the 5'-terminal helix region of 16S rRNA. The sequence is that of Ribosome-binding factor A from Corynebacterium jeikeium (strain K411).